We begin with the raw amino-acid sequence, 1077 residues long: Carbamoyl phosphate synthase large chain (1077 aa).

The carboxyphosphate synthetic domain stretch occupies residues 2–403 (PKRTDIKSIL…SLQKALRGLE (402 aa)). ATP contacts are provided by arginine 129, arginine 169, glycine 175, glycine 176, glutamate 208, leucine 210, glutamate 215, glycine 241, isoleucine 242, histidine 243, glutamine 285, and glutamate 299. The ATP-grasp 1 domain maps to 133–328 (DIAMKKIGLD…IAKIAAKLAV (196 aa)). Positions 285, 299, and 301 each coordinate Mg(2+). Residues glutamine 285, glutamate 299, and asparagine 301 each coordinate Mn(2+). The segment at 404–553 (VGATGFDPKV…YSTYEEECES (150 aa)) is oligomerization domain. Residues 554–936 (NPTSDRPKVM…AFSKAMLGSQ (383 aa)) are carbamoyl phosphate synthetic domain. The ATP-grasp 2 domain occupies 679–870 (QQAVNRLGLK…LAKIAARVMV (192 aa)). Residues arginine 715, arginine 754, leucine 756, glutamate 761, glycine 786, valine 787, histidine 788, serine 789, glutamine 829, and glutamate 841 each contribute to the ATP site. Residues glutamine 829, glutamate 841, and asparagine 843 each coordinate Mg(2+). Mn(2+) is bound by residues glutamine 829, glutamate 841, and asparagine 843. The MGS-like domain occupies 937–1077 (SGMKKSGRAL…MHAKIKNMKA (141 aa)). An allosteric domain region spans residues 937-1077 (SGMKKSGRAL…MHAKIKNMKA (141 aa)).

The protein belongs to the CarB family. Composed of two chains; the small (or glutamine) chain promotes the hydrolysis of glutamine to ammonia, which is used by the large (or ammonia) chain to synthesize carbamoyl phosphate. Tetramer of heterodimers (alpha,beta)4. Mg(2+) serves as cofactor. Requires Mn(2+) as cofactor.

It catalyses the reaction hydrogencarbonate + L-glutamine + 2 ATP + H2O = carbamoyl phosphate + L-glutamate + 2 ADP + phosphate + 2 H(+). It carries out the reaction hydrogencarbonate + NH4(+) + 2 ATP = carbamoyl phosphate + 2 ADP + phosphate + 2 H(+). The protein operates within amino-acid biosynthesis; L-arginine biosynthesis; carbamoyl phosphate from bicarbonate: step 1/1. It participates in pyrimidine metabolism; UMP biosynthesis via de novo pathway; (S)-dihydroorotate from bicarbonate: step 1/3. Its function is as follows. Large subunit of the glutamine-dependent carbamoyl phosphate synthetase (CPSase). CPSase catalyzes the formation of carbamoyl phosphate from the ammonia moiety of glutamine, carbonate, and phosphate donated by ATP, constituting the first step of 2 biosynthetic pathways, one leading to arginine and/or urea and the other to pyrimidine nucleotides. The large subunit (synthetase) binds the substrates ammonia (free or transferred from glutamine from the small subunit), hydrogencarbonate and ATP and carries out an ATP-coupled ligase reaction, activating hydrogencarbonate by forming carboxy phosphate which reacts with ammonia to form carbamoyl phosphate. The polypeptide is Carbamoyl phosphate synthase large chain (Yersinia pestis).